The chain runs to 456 residues: Frizzled/smoothened-like sans CRD protein F (456 aa).

Residues 1 to 30 (MIFNNLKNQNKIINFLIIFYFLSFLKQIES) form the signal peptide. Over 31-92 (QSINITSSSS…PFFTINEWNK (62 aa)) the chain is Extracellular. Asparagine 34, asparagine 52, and asparagine 70 each carry an N-linked (GlcNAc...) asparagine glycan. The helical transmembrane segment at 93–113 (FLNMSLVMGTISFFSGLFLLV) threads the bilayer. The Cytoplasmic portion of the chain corresponds to 114-127 (TYSPIVNKTHNRHT). A helical membrane pass occupies residues 128 to 148 (IGVMCMSFGVCLAMCSDMWNF). The Extracellular portion of the chain corresponds to 149–174 (GSNFTEKSICPSPGQYLSTSNARCLS). Asparagine 151 carries an N-linked (GlcNAc...) asparagine glycan. The chain crosses the membrane as a helical span at residues 175–195 (SGIFLQFGGVFGFLNWTLLSF). Topologically, residues 196-211 (DLFMNIKGIITKNYDK) are cytoplasmic. The chain crosses the membrane as a helical span at residues 212–232 (YYVSGTFIIAIIFTFVPIVND). Topologically, residues 233 to 252 (QYSMSYIGLGCWLGSAMYQL) are extracellular. A helical transmembrane segment spans residues 253–273 (IFFWILLSICLIVSSVFIILI). Over 274–297 (LKEVYIIIKLSKQKTSLKGNIRPL) the chain is Cytoplasmic. The helical transmembrane segment at 298-318 (ICISITGFAFFYMFFYYISIV) threads the bilayer. The Extracellular segment spans residues 319–354 (VEGDYYERVLNEYTDCLMDPTKDISECKSPRMSVAS). The helical transmembrane segment at 355 to 375 (EFVFLLCLRLLGIGAFIFYGI) threads the bilayer. Over 376–456 (NNKVKKIWLN…ESSLNSVDEI (81 aa)) the chain is Cytoplasmic. The segment at 403-422 (ADNDKSNSNGSKVLYRTNNT) is disordered.

This sequence belongs to the G-protein coupled receptor Fz/Smo family.

Its subcellular location is the membrane. In Dictyostelium discoideum (Social amoeba), this protein is Frizzled/smoothened-like sans CRD protein F (fscF).